The chain runs to 142 residues: Photosystem II extrinsic protein U (142 aa).

Positions Met1 to Ala29 are cleaved as a signal peptide.

This sequence belongs to the PsbU family. As to quaternary structure, PSII is composed of 1 copy each of membrane proteins PsbA, PsbB, PsbC, PsbD, PsbE, PsbF, PsbH, PsbI, PsbJ, PsbK, PsbL, PsbM, PsbT, PsbX, PsbY, PsbZ, Psb30/Ycf12, peripheral proteins PsbO, CyanoQ (PsbQ), PsbU, PsbV and a large number of cofactors. It forms dimeric complexes.

Its subcellular location is the cellular thylakoid membrane. Functionally, one of the extrinsic, lumenal subunits of photosystem II (PSII). PSII is a light-driven water plastoquinone oxidoreductase, using light energy to abstract electrons from H(2)O, generating a proton gradient subsequently used for ATP formation. The extrinsic proteins stabilize the structure of photosystem II oxygen-evolving complex (OEC), the ion environment of oxygen evolution and protect the OEC against heat-induced inactivation. The chain is Photosystem II extrinsic protein U from Trichormus variabilis (strain ATCC 29413 / PCC 7937) (Anabaena variabilis).